A 276-amino-acid chain; its full sequence is Elongation factor Ts (276 aa).

The segment at 80–83 (TDFV) is involved in Mg(2+) ion dislocation from EF-Tu.

It belongs to the EF-Ts family.

The protein resides in the cytoplasm. Its function is as follows. Associates with the EF-Tu.GDP complex and induces the exchange of GDP to GTP. It remains bound to the aminoacyl-tRNA.EF-Tu.GTP complex up to the GTP hydrolysis stage on the ribosome. This is Elongation factor Ts from Acidothermus cellulolyticus (strain ATCC 43068 / DSM 8971 / 11B).